Consider the following 155-residue polypeptide: Histone H3-like centromeric protein hH3v (155 aa).

A compositionally biased stretch (low complexity) spans 1-24 (MPPKKGGVTKSKAVSKKAAAVPTP). Residues 1–56 (MPPKKGGVTKSKAVSKKAAAVPTPKATPPGRRKSRASSVQPGDPVPQGKKRRYRPG) form a disordered region. Residues 45-148 (VPQGKKRRYR…IQLARRIRGV (104 aa)) are H3-like.

The protein belongs to the histone H3 family. As to quaternary structure, component of centromeric nucleosomes, where DNA is wrapped around a histone octamer core. The octamer contains two molecules each of H2A, H2B, hH3v/CENPA and H4 assembled in one hH3v-H4 heterotetramer and two H2A-H2B heterodimers. Interacts with the inner kinetochore. Post-translationally, ubiquitinated. Is degraded through ubiquitin-mediated proteolysis when not protected by its association to the kinetochore.

The protein resides in the nucleus. The protein localises to the chromosome. It is found in the centromere. Its function is as follows. Histone H3-like nucleosomal protein that is specifically found in centromeric nucleosomes. Replaces conventional H3 in the nucleosome core of centromeric chromatin that serves as an assembly site for the inner kinetochore. Required for recruitment and assembly of kinetochore proteins, mitotic progression and chromosome segregation. May serve as an epigenetic mark that propagates centromere identity through replication and cell division. In Neurospora crassa (strain ATCC 24698 / 74-OR23-1A / CBS 708.71 / DSM 1257 / FGSC 987), this protein is Histone H3-like centromeric protein hH3v (hH3v).